A 188-amino-acid chain; its full sequence is COMM domain-containing protein 1 (188 aa).

The tract at residues M1–S122 is sufficient for interaction with SLC12A2. H100, M109, and H133 together coordinate Cu cation. Residues G117–M185 enclose the COMM domain. The segment at R124 to A188 is required for binding to PtdIns(4,5)P2.

This sequence belongs to the COMM domain-containing protein 1 family. Component of the commander complex consisting of the CCC subcomplex and the retriever subcomplex. Component of the CCC (COMMD/CCDC22/CCDC93) subcomplex consisting of COMMD1, COMMD2, COMMD3, COMMD4, COMMD5, COMMD6, COMMD7, COMMD8, COMMD9, COMMD10, CCDC22 and CCDC93; within the complex forms a heterodimer with COMMD6. Interacts with VPS35L; the interaction associates the CCC complex with the retriever complex. Identified in a complex with an E3 ubiquitin ligase complex composed of TCEB1/elongin C, CUL2, SOCS1 and RBX1; in the complex interacts directly with SOCS1 and CUL2. Identified in a complex with NF-kappa-B. Interacts directly with SLC12A2. Interacts directly with ATP7B (via the N-terminal region). Interacts with ATP7A. Interacts with FAM107A; this interaction stabilizes COMMD1 in the nucleus. Interacts with CCS, CDKN2A, RELA, REL, RELB, NFKB1/p105, NFKB2/p100, NFKBIB, SCNN1D, SCNN1B, CFTR, CLU, SGK1, AKT1, CUL1, CUL2, CUL3, CUL4A, CUL4B, CUL5, CUL7, HIF1A. Post-translationally, ubiquitinated; undergoes both 'Lys-63'- and 'Lys-48'-linked polyubiquitination. Ubiquitinated by XIAP, leading to its proteasomal degradation.

The protein resides in the nucleus. Its subcellular location is the cytoplasm. It is found in the endosome membrane. It localises to the cytoplasmic vesicle. The protein localises to the early endosome. The protein resides in the recycling endosome. In terms of biological role, scaffold protein in the commander complex that is essential for endosomal recycling of transmembrane cargos; the commander complex is composed of the CCC subcomplex and the retriever subcomplex. Can modulate activity of cullin-RING E3 ubiquitin ligase (CRL) complexes by displacing CAND1; in vitro promotes CRL E3 activity and dissociates CAND1 from CUL1 and CUL2. Promotes ubiquitination of NF-kappa-B subunit RELA and its subsequent proteasomal degradation. Down-regulates NF-kappa-B activity. Involved in the regulation of membrane expression and ubiquitination of SLC12A2. Modulates Na(+) transport in epithelial cells by regulation of apical cell surface expression of amiloride-sensitive sodium channel (ENaC) subunits and by promoting their ubiquitination presumably involving NEDD4L. Promotes the localization of SCNN1D to recycling endosomes. Promotes CFTR cell surface expression through regulation of its ubiquitination. Down-regulates SOD1 activity by interfering with its homodimerization. Plays a role in copper ion homeostasis. Involved in copper-dependent ATP7A trafficking between the trans-Golgi network and vesicles in the cell periphery; the function is proposed to depend on its association within the CCC complex and cooperation with the WASH complex on early endosomes. Can bind one copper ion per monomer. May function to facilitate biliary copper excretion within hepatocytes. Binds to phosphatidylinositol 4,5-bisphosphate (PtdIns(4,5)P2). Involved in the regulation of HIF1A-mediated transcription; competes with ARNT/Hif-1-beta for binding to HIF1A resulting in decreased DNA binding and impaired transcriptional activation by HIF-1. Negatively regulates neuroblastoma G1/S phase cell cycle progression and cell proliferation by stimulating ubiquitination of NF-kappa-B subunit RELA and NF-kappa-B degradation in a FAM107A- and actin-dependent manner. This Mus musculus (Mouse) protein is COMM domain-containing protein 1 (Commd1).